Reading from the N-terminus, the 134-residue chain is Cytochrome b5 (134 aa).

A2 bears the N-acetylalanine mark. An N6-acetyllysine mark is found at K7, K10, and K19. The Cytochrome b5 heme-binding domain occupies 9 to 85 (VKYYTLEEIQ…SKTYIIGELH (77 aa)). Heme-binding residues include H44 and H68. A helical membrane pass occupies residues 109 to 131 (WWTNWVIPAISALAVALMYRLYM).

The protein belongs to the cytochrome b5 family.

It localises to the endoplasmic reticulum membrane. Its subcellular location is the microsome membrane. Its function is as follows. Cytochrome b5 is a membrane-bound hemoprotein functioning as an electron carrier for several membrane-bound oxygenases. It is also involved in several steps of the sterol biosynthesis pathway, particularly in the C-5 double bond introduction during the C-5 desaturation. In Mus musculus (Mouse), this protein is Cytochrome b5 (Cyb5a).